Here is a 420-residue protein sequence, read N- to C-terminus: UDP-N-acetylglucosamine 1-carboxyvinyltransferase (420 aa).

22–23 (KN) lines the phosphoenolpyruvate pocket. Arginine 91 is a binding site for UDP-N-acetyl-alpha-D-glucosamine. The active-site Proton donor is the cysteine 115. Cysteine 115 bears the 2-(S-cysteinyl)pyruvic acid O-phosphothioketal mark. UDP-N-acetyl-alpha-D-glucosamine-binding positions include 120-124 (RPVDL), 160-163 (KVSV), aspartate 305, and isoleucine 327.

This sequence belongs to the EPSP synthase family. MurA subfamily.

It is found in the cytoplasm. The enzyme catalyses phosphoenolpyruvate + UDP-N-acetyl-alpha-D-glucosamine = UDP-N-acetyl-3-O-(1-carboxyvinyl)-alpha-D-glucosamine + phosphate. It functions in the pathway cell wall biogenesis; peptidoglycan biosynthesis. In terms of biological role, cell wall formation. Adds enolpyruvyl to UDP-N-acetylglucosamine. The chain is UDP-N-acetylglucosamine 1-carboxyvinyltransferase from Proteus mirabilis (strain HI4320).